A 308-amino-acid polypeptide reads, in one-letter code: Ribosomal RNA small subunit methyltransferase H (308 aa).

Residues 36–38 (GGH), aspartate 55, phenylalanine 82, aspartate 103, and glutamine 110 contribute to the S-adenosyl-L-methionine site.

The protein belongs to the methyltransferase superfamily. RsmH family.

It localises to the cytoplasm. The catalysed reaction is cytidine(1402) in 16S rRNA + S-adenosyl-L-methionine = N(4)-methylcytidine(1402) in 16S rRNA + S-adenosyl-L-homocysteine + H(+). In terms of biological role, specifically methylates the N4 position of cytidine in position 1402 (C1402) of 16S rRNA. The chain is Ribosomal RNA small subunit methyltransferase H from Helicobacter pylori (strain J99 / ATCC 700824) (Campylobacter pylori J99).